Reading from the N-terminus, the 481-residue chain is OTU domain-containing protein 1 (481 aa).

2 disordered regions span residues 18–60 and 202–282; these read PTAA…AAAE and LAAA…IVSR. A compositionally biased stretch (low complexity) spans 38–58; it reads PPGAAGAAPEPETGECQPAAA. Positions 225–257 are enriched in basic and acidic residues; it reads GEEHLAERGPRGWERGGDRCDAPGGDAARRPDP. The segment covering 261-281 has biased composition (low complexity); it reads APPAGSIEAAPSSAAEPVIVS. One can recognise an OTU domain in the interval 309 to 438; sequence KYRFHIIPDG…NGHYDAVFDH (130 aa). The segment at 314 to 320 is cys-loop; it reads IIPDGNC. Residue Asp317 is part of the active site. Cys320 serves as the catalytic Nucleophile. The interval 369-379 is his-loop; it reads AAQDGAWAGYP. The variable-loop stretch occupies residues 426–431; it reads WLSNGH. His431 is a catalytic residue. The 20-residue stretch at 457–476 folds into the UIM domain; that stretch reads KRDEELAKSMAISLSKMYIE.

The catalysed reaction is Thiol-dependent hydrolysis of ester, thioester, amide, peptide and isopeptide bonds formed by the C-terminal Gly of ubiquitin (a 76-residue protein attached to proteins as an intracellular targeting signal).. In terms of biological role, deubiquitinating enzyme that specifically hydrolyzes 'Lys-63'-linked polyubiquitin to monoubiquitin. Required for the stability and translation of a subset mRNAs with a high abundance of rare codons by mediating deubiquitination of 40S ribosomal protein RPS10/eS10, thereby antagonizing ZNF598-mediated 40S ubiquitination. The abundance of rare codons in mRNAs can limit the translation rate and can lead to ribosome collisions that trigger activation of ribosome quality control (RQC) pathway by ZNF598. OTUD1-mediated deubiquitination prevents activation of the RQC and subsequent dissociation of ribosomes and stimulates formation of polysomes and translation. In Homo sapiens (Human), this protein is OTU domain-containing protein 1.